Consider the following 376-residue polypeptide: tRNA-specific 2-thiouridylase MnmA (376 aa).

ATP contacts are provided by residues 16 to 23 and leucine 42; that span reads AMSGGVDS. Cysteine 111 acts as the Nucleophile in catalysis. The cysteines at positions 111 and 210 are disulfide-linked. Glycine 135 serves as a coordination point for ATP. Residues 158-160 are interaction with tRNA; sequence KDQ. Catalysis depends on cysteine 210, which acts as the Cysteine persulfide intermediate.

This sequence belongs to the MnmA/TRMU family.

The protein localises to the cytoplasm. The enzyme catalyses S-sulfanyl-L-cysteinyl-[protein] + uridine(34) in tRNA + AH2 + ATP = 2-thiouridine(34) in tRNA + L-cysteinyl-[protein] + A + AMP + diphosphate + H(+). Functionally, catalyzes the 2-thiolation of uridine at the wobble position (U34) of tRNA, leading to the formation of s(2)U34. The sequence is that of tRNA-specific 2-thiouridylase MnmA from Streptomyces avermitilis (strain ATCC 31267 / DSM 46492 / JCM 5070 / NBRC 14893 / NCIMB 12804 / NRRL 8165 / MA-4680).